The sequence spans 509 residues: Protein WHAT'S THIS FACTOR 1 homolog, chloroplastic (509 aa).

The transit peptide at 1-56 (MDAKLLLLPFPSPPATLHHHPPPPKSLFLGASLPLLHPPPPLRLLRPGAPRRLAVV) directs the protein to the chloroplast. Positions 65-393 (KEIPFDNVIQ…LKEKMRALVA (329 aa)) constitute a PORR domain. Disordered regions lie at residues 402 to 431 (VPAT…DEDE) and 444 to 509 (SGGK…RERW). Acidic residues predominate over residues 461–474 (ENDDSPPDFEDDDG).

The protein localises to the plastid. The protein resides in the chloroplast. Its function is as follows. RNA-binding protein involved in group II intron splicing. Binds specific group II introns and promotes their splicing. Functions in the context of a heterodimer with the ribonuclease III domain-containing protein RNC1. In Oryza sativa subsp. japonica (Rice), this protein is Protein WHAT'S THIS FACTOR 1 homolog, chloroplastic.